Consider the following 470-residue polypeptide: Putative bifunctional phosphatase/peptidyl-prolyl cis-trans isomerase (470 aa).

Catalysis depends on D22, which acts as the Nucleophile. Residues D22, D24, and D221 each contribute to the Mg(2+) site. The PPIase cyclophilin-type domain occupies 286–468 (TGPKVTIKTN…EDVIIETIEV (183 aa)).

It in the C-terminal section; belongs to the cyclophilin-type PPIase family. PPIL1 subfamily. The cofactor is Mg(2+).

The enzyme catalyses [protein]-peptidylproline (omega=180) = [protein]-peptidylproline (omega=0). In terms of biological role, PPIases accelerate the folding of proteins. It catalyzes the cis-trans isomerization of proline imidic peptide bonds in oligopeptides. This is Putative bifunctional phosphatase/peptidyl-prolyl cis-trans isomerase from Streptococcus pyogenes serotype M6 (strain ATCC BAA-946 / MGAS10394).